The following is a 690-amino-acid chain: F-box/LRR-repeat protein 5 (690 aa).

A hemerythrin-like region spans residues 1 to 159 (MAPFPDEVDV…IKKKVIAQHC (159 aa)). Positions 15, 57, 58, 61, 80, 126, and 130 each coordinate Fe(3+). The region spanning 202-248 (STGITHLPPEVMLSIFSYLNPQELCRCSQVSTKWSQLAKTGSLWKHL) is the F-box domain. 7 LRR repeats span residues 340-364 (SSAV…LDLT), 365-392 (QTDI…DLSG), 393-418 (CEKI…QSGF), 478-507 (VWML…CVME), 575-606 (TTLP…SLSG), 607-634 (CYQI…NLSG), and 635-660 (CLTV…YFYY). [2Fe-2S] cluster is bound by residues Cys-661, Cys-675, Cys-685, and Cys-686.

In terms of assembly, part of a SCF (SKP1-cullin-F-box) protein ligase complex. Interacts with ACO1/IRP1, IREB2/IRP2; the interaction depends on the [2Fe-2S] cluster. Interacts with DCTN1/p150-glued. [2Fe-2S] cluster is required as a cofactor. In terms of processing, polybiquitinated upon iron and oxygen depletion, leading to its degradation by the proteasome. Ubiquitination is regulated by the hemerythrin-like region that acts as an oxygen and iron sensor. Undergoes constitutive ubiquitin-dependent degradation at the steady state by HERC2. In terms of tissue distribution, ubiquitously expressed. Highly expressed in early embryogenesis with expression decreasing as the embryo progresses through development (E11 and E15).

Its subcellular location is the cytoplasm. The protein localises to the perinuclear region. It localises to the nucleus. It participates in protein modification; protein ubiquitination. With respect to regulation, an iron-sulfur cluster promotes IRP2 polyubiquitination and degradation in response to both iron and oxygen concentrations. In terms of biological role, component of some SCF (SKP1-cullin-F-box) protein ligase complex that plays a central role in iron homeostasis by promoting the ubiquitination and subsequent degradation of IREB2/IRP2. The C-terminal domain of FBXL5 contains a redox-sensitive [2Fe-2S] cluster that, upon oxidation, promotes binding to IRP2 to effect its oxygen-dependent degradation. Under iron deficiency conditions, the N-terminal hemerythrin-like (Hr) region, which contains a diiron metal center, cannot bind iron and undergoes conformational changes that destabilize the FBXL5 protein and cause its ubiquitination and degradation. When intracellular iron levels start rising, the Hr region is stabilized. Additional increases in iron levels facilitate the assembly and incorporation of a redox active [2Fe-2S] cluster in the C-terminal domain. Only when oxygen level is high enough to maintain the cluster in its oxidized state can FBXL5 recruit IRP2 as a substrate for polyubiquination and degradation. Promotes ubiquitination and subsequent degradation of the dynactin complex component DCTN1. Within the nucleus, promotes the ubiquitination of SNAI1; preventing its interaction with DNA and promoting its degradation. Negatively regulates DNA damage response by mediating the ubiquitin-proteasome degradation of the DNA repair protein NABP2. The polypeptide is F-box/LRR-repeat protein 5 (Fbxl5) (Mus musculus (Mouse)).